The following is a 179-amino-acid chain: Signal peptidase complex subunit 3 (179 aa).

Over 1–12 (MHTVLTRGNATV) the chain is Cytoplasmic. A helical; Signal-anchor for type II membrane protein membrane pass occupies residues 13–33 (AYTLSVLACLTFSCFLSTVFL). Topologically, residues 34–179 (DYRTDANINT…FPADYATSSI (146 aa)) are lumenal. N-linked (GlcNAc...) asparagine glycosylation is found at asparagine 73 and asparagine 141.

It belongs to the SPCS3 family. In terms of assembly, component of the signal peptidase complex (SPC) composed of a catalytic subunit twr/SEC11 and three accessory subunits Spase12/SPCS1, Spase25/SPCS2 and Spase22-23/SPCS3. The complex induces a local thinning of the ER membrane which is used to measure the length of the signal peptide (SP) h-region of protein substrates. This ensures the selectivity of the complex towards h-regions shorter than 18-20 amino acids.

The protein resides in the endoplasmic reticulum membrane. Essential component of the signal peptidase complex (SPC) which catalyzes the cleavage of N-terminal signal sequences from nascent proteins as they are translocated into the lumen of the endoplasmic reticulum. Essential for the SPC catalytic activity, possibly by stabilizing and positioning the active center of the complex close to the lumenal surface. Its function is as follows. (Microbial infection) Plays an important role in infection by flaviviruses such as West Nile virus and Dengue virus type 2. The chain is Signal peptidase complex subunit 3 (Spase22-23) from Drosophila melanogaster (Fruit fly).